A 238-amino-acid polypeptide reads, in one-letter code: Major prion protein (238 aa).

The signal sequence occupies residues 1-15 (MLVLFVATWSDLGLC). Residues 16 to 215 (KKRPKPGGWN…ESQAYYQRGS (200 aa)) are interaction with GRB2, ERI3 and SYN1. Residues 18–93 (RPKPGGWNTG…WHKPSKPKTS (76 aa)) form a disordered region. A run of 4 repeats spans residues 44–52 (PQGGGGWGQ), 53–60 (PHGGGWGQ), 61–68 (PHGGGWGQ), and 69–76 (PHGGGWGQ). Positions 44–76 (PQGGGGWGQPHGGGWGQPHGGGWGQPHGGGWGQ) are 4 X 8 AA tandem repeats of P-H-G-G-G-W-G-Q. The segment covering 45 to 80 (QGGGGWGQPHGGGWGQPHGGGWGQPHGGGWGQGGGT) has biased composition (gly residues). Glycine 47, glycine 48, histidine 54, glycine 55, glycine 56, histidine 62, glycine 63, glycine 64, histidine 70, glycine 71, and glycine 72 together coordinate Cu(2+). The span at 83-93 (QWHKPSKPKTS) shows a compositional bias: basic residues. Residues cysteine 164 and cysteine 199 are joined by a disulfide bond. N-linked (GlcNAc...) asparagine glycans are attached at residues asparagine 166 and asparagine 182. A lipid anchor (GPI-anchor amidated serine) is attached at serine 215. A propeptide spans 216–238 (SMVLFSSPPVILLISFLIFLIVG) (removed in mature form).

The protein belongs to the prion family. Monomer and homodimer. Has a tendency to aggregate into amyloid fibrils containing a cross-beta spine, formed by a steric zipper of superposed beta-strands. Soluble oligomers may represent an intermediate stage on the path to fibril formation. Copper binding may promote oligomerization. Interacts with GRB2, APP, ERI3/PRNPIP and SYN1. Mislocalized cytosolically exposed PrP interacts with MGRN1; this interaction alters MGRN1 subcellular location and causes lysosomal enlargement. Interacts with KIAA1191.

It is found in the cell membrane. The protein resides in the golgi apparatus. Its function is as follows. Its primary physiological function is unclear. Has cytoprotective activity against internal or environmental stresses. May play a role in neuronal development and synaptic plasticity. May be required for neuronal myelin sheath maintenance. May play a role in iron uptake and iron homeostasis. Soluble oligomers are toxic to cultured neuroblastoma cells and induce apoptosis (in vitro). Association with GPC1 (via its heparan sulfate chains) targets PRNP to lipid rafts. Also provides Cu(2+) or Zn(2+) for the ascorbate-mediated GPC1 deaminase degradation of its heparan sulfate side chains. This is Major prion protein (PRNP) from Macaca sylvanus (Barbary macaque).